The sequence spans 466 residues: Ribulose bisphosphate carboxylase large chain (466 aa).

Lysine 5 carries the N6,N6,N6-trimethyllysine modification. Substrate-binding residues include asparagine 114 and threonine 164. Lysine 166 serves as the catalytic Proton acceptor. Position 168 (lysine 168) interacts with substrate. Mg(2+)-binding residues include lysine 192, aspartate 194, and glutamate 195. N6-carboxylysine is present on lysine 192. The Proton acceptor role is filled by histidine 285. Residues arginine 286, histidine 318, and serine 370 each coordinate substrate.

The protein belongs to the RuBisCO large chain family. Type I subfamily. In terms of assembly, heterohexadecamer of 8 large chains and 8 small chains; disulfide-linked. The disulfide link is formed within the large subunit homodimers. The cofactor is Mg(2+). In terms of processing, the disulfide bond which can form in the large chain dimeric partners within the hexadecamer appears to be associated with oxidative stress and protein turnover.

It is found in the plastid. The protein localises to the chloroplast. The catalysed reaction is 2 (2R)-3-phosphoglycerate + 2 H(+) = D-ribulose 1,5-bisphosphate + CO2 + H2O. The enzyme catalyses D-ribulose 1,5-bisphosphate + O2 = 2-phosphoglycolate + (2R)-3-phosphoglycerate + 2 H(+). Its function is as follows. RuBisCO catalyzes two reactions: the carboxylation of D-ribulose 1,5-bisphosphate, the primary event in carbon dioxide fixation, as well as the oxidative fragmentation of the pentose substrate in the photorespiration process. Both reactions occur simultaneously and in competition at the same active site. This Adoxa moschatellina (Moschatel) protein is Ribulose bisphosphate carboxylase large chain.